The chain runs to 89 residues: Sec-independent protein translocase protein TatA (89 aa).

The chain crosses the membrane as a helical span at residues 1 to 21 (MGGISIWQLLIIALIVVLLFG). Residues 47–61 (EEKKALEENATDKPA) are compositionally biased toward basic and acidic residues. The tract at residues 47-89 (EEKKALEENATDKPAADTAKVTETAKVAETAEKKAESKGKEQA) is disordered. Low complexity predominate over residues 62–74 (ADTAKVTETAKVA). The span at 75–89 (ETAEKKAESKGKEQA) shows a compositional bias: basic and acidic residues.

This sequence belongs to the TatA/E family. As to quaternary structure, the Tat system comprises two distinct complexes: a TatABC complex, containing multiple copies of TatA, TatB and TatC subunits, and a separate TatA complex, containing only TatA subunits. Substrates initially bind to the TatABC complex, which probably triggers association of the separate TatA complex to form the active translocon.

Its subcellular location is the cell inner membrane. In terms of biological role, part of the twin-arginine translocation (Tat) system that transports large folded proteins containing a characteristic twin-arginine motif in their signal peptide across membranes. TatA could form the protein-conducting channel of the Tat system. The protein is Sec-independent protein translocase protein TatA of Shewanella pealeana (strain ATCC 700345 / ANG-SQ1).